Here is a 364-residue protein sequence, read N- to C-terminus: Trans-enoyl reductase sthE (364 aa).

51-54 (TDYK) contributes to the NADP(+) binding site. A substrate-binding site is contributed by 137 to 144 (WGTAALAI). Residues 172-175 (ATAT), 195-198 (SESS), Tyr-213, and 261-262 (LE) contribute to the NADP(+) site. 281 to 285 (GFEGQ) lines the substrate pocket. 351–352 (VK) lines the NADP(+) pocket.

This sequence belongs to the zinc-containing alcohol dehydrogenase family. In terms of assembly, monomer.

The catalysed reaction is 7 malonyl-CoA + acetyl-CoA + 10 AH2 + 5 S-adenosyl-L-methionine + 2 H(+) = dehydroprobetaenone I + 10 A + 5 S-adenosyl-L-homocysteine + 7 CO2 + 8 CoA + 6 H2O. It participates in mycotoxin biosynthesis. Trans-enoyl reductase; part of the gene cluster that mediates the biosynthesis of the phytotoxin stemphyloxin II. The first step of the pathway is the synthesis of dehydroprobetaenone I by the polyketide synthase sthA and the enoyl reductase sthE via condensation of one acetyl-CoA starter unit with 7 malonyl-CoA units and 5 methylations. The C-terminal reductase (R) domain of sthA catalyzes the reductive release of the polyketide chain. Because sthA lacks a designated enoylreductase (ER) domain, the required activity is provided the enoyl reductase sthE. The short-chain dehydrogenase/reductase sthC then catalyzes reduction of dehydroprobetaenone I to probetaenone I. The cytochrome P450 monooxygenase sthF catalyzes successive epoxidation, oxidation (resulting from epoxide opening) and hydroxylation to install a tertiary alcohol in the decaline ring to yield betaenone C from dehydroprobetaenone I and betaenone B from probetaenone I. The FAD-linked oxidoreductase sthB is responsible for the conversion of betaenone C to betaenone A via an intramolecular aldol reaction between C-1 and C-17 to form the bridged tricyclic system in betaenone A. Finally, the cytochrome P450 monooxygenase sthD catalyzes the hydroxylation of C-15 to afford the final metabolite stemphyloxin II. The polypeptide is Trans-enoyl reductase sthE (Phaeosphaeria nodorum (strain SN15 / ATCC MYA-4574 / FGSC 10173) (Glume blotch fungus)).